The primary structure comprises 126 residues: Holo-[acyl-carrier-protein] synthase (126 aa).

2 residues coordinate Mg(2+): D8 and E57.

Belongs to the P-Pant transferase superfamily. AcpS family. Mg(2+) serves as cofactor.

Its subcellular location is the cytoplasm. The enzyme catalyses apo-[ACP] + CoA = holo-[ACP] + adenosine 3',5'-bisphosphate + H(+). Transfers the 4'-phosphopantetheine moiety from coenzyme A to a Ser of acyl-carrier-protein. This chain is Holo-[acyl-carrier-protein] synthase, found in Geobacter metallireducens (strain ATCC 53774 / DSM 7210 / GS-15).